Here is a 101-residue protein sequence, read N- to C-terminus: Integration host factor subunit beta (101 aa).

The interval 58-101 is disordered; sequence ARAGRNPRTGAHVPVDQKSVPFFKTGKEMRERLNRDTGAPDSGA. Positions 82–92 are enriched in basic and acidic residues; that stretch reads TGKEMRERLNR.

It belongs to the bacterial histone-like protein family. As to quaternary structure, heterodimer of an alpha and a beta chain.

Functionally, this protein is one of the two subunits of integration host factor, a specific DNA-binding protein that functions in genetic recombination as well as in transcriptional and translational control. The protein is Integration host factor subunit beta of Rhodopseudomonas palustris (strain BisB18).